A 329-amino-acid chain; its full sequence is 36 kDa antigen (329 aa).

Residues 11–31 (AILTGGGALLLGLIVLFYLAY) traverse the membrane as a helical segment.

Belongs to the membrane fusion protein (MFP) (TC 8.A.1) family.

It localises to the membrane. The polypeptide is 36 kDa antigen (Helicobacter pylori (strain ATCC 700392 / 26695) (Campylobacter pylori)).